Reading from the N-terminus, the 275-residue chain is Dermonecrotic toxin SpeSicTox-betaIIA3i (275 aa).

The active site involves His5. Glu25 and Asp27 together coordinate Mg(2+). The active-site Nucleophile is His41. Intrachain disulfides connect Cys45-Cys51 and Cys47-Cys190. Asp85 contributes to the Mg(2+) binding site.

This sequence belongs to the arthropod phospholipase D family. Class II subfamily. The cofactor is Mg(2+). As to expression, expressed by the venom gland.

It is found in the secreted. The enzyme catalyses an N-(acyl)-sphingosylphosphocholine = an N-(acyl)-sphingosyl-1,3-cyclic phosphate + choline. It carries out the reaction an N-(acyl)-sphingosylphosphoethanolamine = an N-(acyl)-sphingosyl-1,3-cyclic phosphate + ethanolamine. The catalysed reaction is a 1-acyl-sn-glycero-3-phosphocholine = a 1-acyl-sn-glycero-2,3-cyclic phosphate + choline. It catalyses the reaction a 1-acyl-sn-glycero-3-phosphoethanolamine = a 1-acyl-sn-glycero-2,3-cyclic phosphate + ethanolamine. Its function is as follows. Dermonecrotic toxins cleave the phosphodiester linkage between the phosphate and headgroup of certain phospholipids (sphingolipid and lysolipid substrates), forming an alcohol (often choline) and a cyclic phosphate. This toxin acts on sphingomyelin (SM). It may also act on ceramide phosphoethanolamine (CPE), lysophosphatidylcholine (LPC) and lysophosphatidylethanolamine (LPE), but not on lysophosphatidylserine (LPS), and lysophosphatidylglycerol (LPG). It acts by transphosphatidylation, releasing exclusively cyclic phosphate products as second products. Induces dermonecrosis, hemolysis, increased vascular permeability, edema, inflammatory response, and platelet aggregation. The sequence is that of Dermonecrotic toxin SpeSicTox-betaIIA3i from Sicarius peruensis (Six-eyed sand spider).